Consider the following 179-residue polypeptide: Large ribosomal subunit protein bL17 (179 aa).

A disordered region spans residues 127-179; sequence TDTLPDTVIDTGPDSAPDPVPGSEPGSAAGDLPDADTAPADPGESSSNQRVIR. Low complexity predominate over residues 154 to 168; the sequence is AAGDLPDADTAPADP. Residues 170-179 are compositionally biased toward polar residues; sequence ESSSNQRVIR.

It belongs to the bacterial ribosomal protein bL17 family. In terms of assembly, part of the 50S ribosomal subunit. Contacts protein L32.

In Tropheryma whipplei (strain TW08/27) (Whipple's bacillus), this protein is Large ribosomal subunit protein bL17.